The sequence spans 94 residues: FXYD domain-containing ion transport regulator 6 (94 aa).

The first 17 residues, 1 to 17 (METVLVLCSLLAPVVLA), serve as a signal peptide directing secretion. At 18-34 (SAAEKEKEKDPFYYDYQ) the chain is on the extracellular side. A helical transmembrane segment spans residues 35–57 (TLRIGGLVFAVVLFSVGILLILS). Residues 58-94 (RRCKCSFNQKPRAPGDEEAQVENLITTNAAEPQKAEN) lie on the Cytoplasmic side of the membrane.

It belongs to the FXYD family. Regulatory subunit of the sodium/potassium-transporting ATPase which is composed of a catalytic alpha subunit, a non-catalytic beta subunit and an additional regulatory subunit. The regulatory subunit, a member of the FXYD protein family, modulates the enzymatic activity in a tissue- and isoform-specific way by changing affinities of the Na+/K+-ATPase toward Na(+), K(+) or ATP.

The protein resides in the cell membrane. In terms of biological role, associates with and regulates the activity of the sodium/potassium-transporting ATPase (NKA) which catalyzes the hydrolysis of ATP coupled with the exchange of Na(+) and K(+) ions across the plasma membrane. Reduces the apparent affinity for intracellular Na(+) with no change in the apparent affinity for extracellular K(+). In addition to modulating NKA kinetics, may also function as a regulator of NKA localization to the plasma membrane. This chain is FXYD domain-containing ion transport regulator 6 (Fxyd6), found in Mus musculus (Mouse).